An 880-amino-acid chain; its full sequence is Alanine--tRNA ligase (880 aa).

Histidine 567, histidine 571, cysteine 669, and histidine 673 together coordinate Zn(2+).

Belongs to the class-II aminoacyl-tRNA synthetase family. The cofactor is Zn(2+).

It localises to the cytoplasm. The enzyme catalyses tRNA(Ala) + L-alanine + ATP = L-alanyl-tRNA(Ala) + AMP + diphosphate. In terms of biological role, catalyzes the attachment of alanine to tRNA(Ala) in a two-step reaction: alanine is first activated by ATP to form Ala-AMP and then transferred to the acceptor end of tRNA(Ala). Also edits incorrectly charged Ser-tRNA(Ala) and Gly-tRNA(Ala) via its editing domain. The protein is Alanine--tRNA ligase of Bacillus cytotoxicus (strain DSM 22905 / CIP 110041 / 391-98 / NVH 391-98).